A 420-amino-acid polypeptide reads, in one-letter code: Torsin-4A (420 aa).

Residues 130 to 150 (CLLLFIAIVCFQIFNAIENLD) traverse the membrane as a helical segment. 202 to 209 (GPSGVGKS) lines the ATP pocket.

This sequence belongs to the ClpA/ClpB family. Torsin subfamily.

The protein resides in the membrane. The polypeptide is Torsin-4A (tor4a) (Xenopus tropicalis (Western clawed frog)).